The chain runs to 314 residues: DNA-directed RNA polymerase subunit alpha (314 aa).

The alpha N-terminal domain (alpha-NTD) stretch occupies residues Met1–Ser227. The segment at Val241–Asn314 is alpha C-terminal domain (alpha-CTD).

It belongs to the RNA polymerase alpha chain family. As to quaternary structure, homodimer. The RNAP catalytic core consists of 2 alpha, 1 beta, 1 beta' and 1 omega subunit. When a sigma factor is associated with the core the holoenzyme is formed, which can initiate transcription.

It catalyses the reaction RNA(n) + a ribonucleoside 5'-triphosphate = RNA(n+1) + diphosphate. DNA-dependent RNA polymerase catalyzes the transcription of DNA into RNA using the four ribonucleoside triphosphates as substrates. In Oenococcus oeni (strain ATCC BAA-331 / PSU-1), this protein is DNA-directed RNA polymerase subunit alpha.